The chain runs to 158 residues: NAD(P)H-quinone oxidoreductase subunit N (158 aa).

This sequence belongs to the complex I NdhN subunit family. In terms of assembly, NDH-1 can be composed of about 15 different subunits; different subcomplexes with different compositions have been identified which probably have different functions.

Its subcellular location is the cellular thylakoid membrane. It catalyses the reaction a plastoquinone + NADH + (n+1) H(+)(in) = a plastoquinol + NAD(+) + n H(+)(out). It carries out the reaction a plastoquinone + NADPH + (n+1) H(+)(in) = a plastoquinol + NADP(+) + n H(+)(out). Its function is as follows. NDH-1 shuttles electrons from an unknown electron donor, via FMN and iron-sulfur (Fe-S) centers, to quinones in the respiratory and/or the photosynthetic chain. The immediate electron acceptor for the enzyme in this species is believed to be plastoquinone. Couples the redox reaction to proton translocation, and thus conserves the redox energy in a proton gradient. Cyanobacterial NDH-1 also plays a role in inorganic carbon-concentration. This Rippkaea orientalis (strain PCC 8801 / RF-1) (Cyanothece sp. (strain PCC 8801)) protein is NAD(P)H-quinone oxidoreductase subunit N.